We begin with the raw amino-acid sequence, 348 residues long: Flagellar P-ring protein (348 aa).

The signal sequence occupies residues 1-16; sequence MRVLTIFLLFMTSIFA.

This sequence belongs to the FlgI family. The basal body constitutes a major portion of the flagellar organelle and consists of four rings (L,P,S, and M) mounted on a central rod.

The protein resides in the periplasm. The protein localises to the bacterial flagellum basal body. In terms of biological role, assembles around the rod to form the L-ring and probably protects the motor/basal body from shearing forces during rotation. The sequence is that of Flagellar P-ring protein from Campylobacter jejuni subsp. doylei (strain ATCC BAA-1458 / RM4099 / 269.97).